Here is a 348-residue protein sequence, read N- to C-terminus: Keratocan (348 aa).

The N-terminal stretch at Met-1 to Ser-26 is a signal peptide. Residues Ala-40–Pro-69 form the LRRNT domain. 2 cysteine pairs are disulfide-bonded: Cys-41–Cys-47 and Cys-45–Cys-57. LRR repeat units follow at residues Pro-70–Asn-92, Ala-93–Ala-118, Met-119–Pro-140, Ala-141–Gly-163, Gly-165–Gly-189, Leu-190–Thr-213, Thr-215–Gly-234, Leu-235–Leu-260, Ser-262–Ser-280, and Ser-281–Pro-303. Asn-92 carries N-linked (GlcNAc...) (keratan sulfate) asparagine glycosylation. Asn-259 carries an N-linked (GlcNAc...) (keratan sulfate) asparagine glycan. Asn-297 carries N-linked (GlcNAc...) asparagine glycosylation. Cys-302 and Cys-339 are joined by a disulfide.

The protein belongs to the small leucine-rich proteoglycan (SLRP) family. SLRP class II subfamily. Glycosylated. Contains keratan sulfate chains. In terms of tissue distribution, expressed in eye, where it is found in the corneal epithelial layer and to a lesser extent in the stromal layer (at protein level).

The protein resides in the secreted. It is found in the extracellular space. The protein localises to the extracellular matrix. In terms of biological role, may be important in developing and maintaining corneal transparency and for the structure of the stromal matrix. This is Keratocan from Danio rerio (Zebrafish).